Consider the following 39-residue polypeptide: U2-ctenitoxin-Co1a (39 aa).

In terms of processing, disulfide bonds are present. In terms of tissue distribution, expressed by the venom gland.

It localises to the secreted. In terms of biological role, omega-agatoxins are antagonists of voltage-gated calcium channels (Cav). This is U2-ctenitoxin-Co1a from Ctenus ornatus (Brazilian spider).